The chain runs to 146 residues: Bradykinin-like neuropeptide (146 aa).

An N-terminal signal peptide occupies residues 1-24; the sequence is MTSSIYGFITLSVVALISQTTCRS. 2 propeptides span residues 25 to 80 and 92 to 146; these read LDLL…LMEA and LRSY…FRYG.

In terms of tissue distribution, neuron L5.

It localises to the secreted. May have important functions in renal physiology and in animal behavior, as does bradykinin. In Aplysia californica (California sea hare), this protein is Bradykinin-like neuropeptide (LUQ-1).